A 1065-amino-acid chain; its full sequence is Carbamoyl phosphate synthase large chain (1065 aa).

The tract at residues 1–401 (MPKRTDIETI…AMLKAVRSLE (401 aa)) is carboxyphosphate synthetic domain. 12 residues coordinate ATP: arginine 129, arginine 169, glycine 175, glycine 176, lysine 208, isoleucine 210, glutamate 215, glycine 241, isoleucine 242, histidine 243, glutamine 284, and glutamate 298. Residues 133–327 (RNLMYELGAP…IAKLAAKIAV (195 aa)) form the ATP-grasp 1 domain. Mg(2+) is bound by residues glutamine 284, glutamate 298, and asparagine 300. Positions 284, 298, and 300 each coordinate Mn(2+). An oligomerization domain region spans residues 402 to 546 (TGQVHLELKH…YGTYEEENES (145 aa)). Positions 547–929 (IKSEKPSVVV…ALYKGLVAAG (383 aa)) are carbamoyl phosphate synthetic domain. The region spanning 671–861 (EQALRDLNIP…MANIATKAIL (191 aa)) is the ATP-grasp 2 domain. Arginine 707, arginine 746, leucine 748, glutamate 752, glycine 777, valine 778, histidine 779, serine 780, glutamine 820, and glutamate 832 together coordinate ATP. Mg(2+) contacts are provided by glutamine 820, glutamate 832, and asparagine 834. Glutamine 820, glutamate 832, and asparagine 834 together coordinate Mn(2+). The 136-residue stretch at 930-1065 (MEIRTEGTVL…EEMPKAEVVH (136 aa)) folds into the MGS-like domain. An allosteric domain region spans residues 930–1065 (MEIRTEGTVL…EEMPKAEVVH (136 aa)).

Belongs to the CarB family. As to quaternary structure, composed of two chains; the small (or glutamine) chain promotes the hydrolysis of glutamine to ammonia, which is used by the large (or ammonia) chain to synthesize carbamoyl phosphate. Tetramer of heterodimers (alpha,beta)4. It depends on Mg(2+) as a cofactor. Mn(2+) is required as a cofactor.

The enzyme catalyses hydrogencarbonate + L-glutamine + 2 ATP + H2O = carbamoyl phosphate + L-glutamate + 2 ADP + phosphate + 2 H(+). The catalysed reaction is hydrogencarbonate + NH4(+) + 2 ATP = carbamoyl phosphate + 2 ADP + phosphate + 2 H(+). The protein operates within amino-acid biosynthesis; L-arginine biosynthesis; carbamoyl phosphate from bicarbonate: step 1/1. Its pathway is pyrimidine metabolism; UMP biosynthesis via de novo pathway; (S)-dihydroorotate from bicarbonate: step 1/3. Its function is as follows. Large subunit of the glutamine-dependent carbamoyl phosphate synthetase (CPSase). CPSase catalyzes the formation of carbamoyl phosphate from the ammonia moiety of glutamine, carbonate, and phosphate donated by ATP, constituting the first step of 2 biosynthetic pathways, one leading to arginine and/or urea and the other to pyrimidine nucleotides. The large subunit (synthetase) binds the substrates ammonia (free or transferred from glutamine from the small subunit), hydrogencarbonate and ATP and carries out an ATP-coupled ligase reaction, activating hydrogencarbonate by forming carboxy phosphate which reacts with ammonia to form carbamoyl phosphate. This chain is Carbamoyl phosphate synthase large chain, found in Lysinibacillus sphaericus (strain C3-41).